We begin with the raw amino-acid sequence, 591 residues long: Transcription factor COE1 (591 aa).

M1 bears the N-acetylmethionine mark. Polar residues predominate over residues 1 to 14; that stretch reads MFGIQESIQRSGSS. A disordered region spans residues 1–21; that stretch reads MFGIQESIQRSGSSMKEEPLG. A Glycyl lysine isopeptide (Lys-Gly) (interchain with G-Cter in SUMO1); alternate cross-link involves residue K16. A Glycyl lysine isopeptide (Lys-Gly) (interchain with G-Cter in SUMO2); alternate cross-link involves residue K16. The interval 63 to 66 is interaction with DNA; the sequence is RKSN. The C5-type zinc-finger motif lies at 151-170; that stretch reads CRVLLTHEIMCSRCCDKKSC. 2 interaction with DNA regions span residues 197-204 and 236-239; these read NCLKNAGN and NNSK. Residues 262 to 345 enclose the IPT/TIG domain; the sequence is PCIKAISPSE…KGTPGRFIYT (84 aa). The segment at 457 to 480 is disordered; that stretch reads GFTRNSSSVSPHGYVPSTTPQQTN.

This sequence belongs to the COE family. As to quaternary structure, homodimer. Interacts with ZNF423 and ZNF521, leading to prevent EBF1 to bind DNA and activate target genes. Interacts with CCR4-NOT component CNOT3. In terms of assembly, (Microbial infection) Interacts with Epstein-barr virus protein EBNA2.

It localises to the nucleus. In terms of biological role, key pioneer transcription factor of B-cell specification and commitment. Recognizes variations of the palindromic sequence 5'-ATTCCCNNGGGAATT-3'. Operates in a transcription factor network to activate B-cell-specific genes and repress genes associated with alternative cell fates. For instance, positively regulates many B-cell specific genes including BCR or CD40 while repressing genes that direct cells into alternative lineages, including GATA3 and TCF7 for the T-cell lineage. In addition to its role during lymphopoiesis, controls the thermogenic gene program in adipocytes during development and in response to environmental cold. Its function is as follows. (Microbial infection) Acts as a chromatin anchor for Epstein-Barr virus EBNA2 to mediate the assembly of EBNA2 chromatin complexes in B-cells. In addition, binds to the viral LMP1 proximal promoter and promotes its expression during latency. This chain is Transcription factor COE1 (EBF1), found in Homo sapiens (Human).